A 201-amino-acid polypeptide reads, in one-letter code: UPF0056 membrane protein PH0760 (201 aa).

6 helical membrane-spanning segments follow: residues 8-28 (FMILYTGMFAITNPIGAVPVF), 49-69 (ITVFITLTVFALVGQWIFKFF), 73-93 (IDAFAIAGGILLFRMGMEMLS), 111-131 (VAVIPLAIPLISGPGAITTVM), 140-160 (GIVILTIIAIGLTTYGILYSG), and 181-201 (LILTSMAMQMIINGIKGAFGI).

The protein belongs to the UPF0056 (MarC) family.

The protein resides in the cell membrane. The protein is UPF0056 membrane protein PH0760 of Pyrococcus horikoshii (strain ATCC 700860 / DSM 12428 / JCM 9974 / NBRC 100139 / OT-3).